Reading from the N-terminus, the 291-residue chain is Protease HtpX homolog (291 aa).

2 helical membrane-spanning segments follow: residues 4 to 24 (VILFLLTNFAVMLVLSVTARI) and 38 to 58 (MGMLLVFAALIGFGGSFISLL). H144 serves as a coordination point for Zn(2+). E145 is an active-site residue. Zn(2+) is bound at residue H148. Helical transmembrane passes span 159-179 (LIQGVLNTFVIFLSRIIAYAV) and 199-219 (ISSIACEILFGILASIVVMFF). Residue E224 participates in Zn(2+) binding.

It belongs to the peptidase M48B family. Zn(2+) is required as a cofactor.

The protein localises to the cell inner membrane. This is Protease HtpX homolog from Pelodictyon phaeoclathratiforme (strain DSM 5477 / BU-1).